We begin with the raw amino-acid sequence, 880 residues long: Pyruvate, phosphate dikinase (880 aa).

Residues 1–348 form an N-terminal region; sequence MNKLIYYFGN…LYILQTRTAK (348 aa). Arginine 97 contributes to the ATP binding site. The linker 1 stretch occupies residues 349–405; it reads RTAIAAINIAVQMVKEKLISKEQALMRIDPESLNQLLHTRIDYSKGLTSIAEGLPAS. The central stretch occupies residues 406 to 503; the sequence is PGAATGIVVF…VIKQGDIITI (98 aa). A Phosphothreonine; by PDRP1 modification is found at threonine 458. Histidine 460 functions as the Tele-phosphohistidine intermediate in the catalytic mechanism. Residues 504-538 form a linker 2 region; that stretch reads DGGSGKIFLGEMPLIQPTFSEESKLILDWADEISS. The interval 539–880 is C-terminal; the sequence is LKVRANAETV…AAQAKIKQGS (342 aa). The substrate site is built by arginine 566, arginine 622, glutamate 750, glycine 771, threonine 772, asparagine 773, and aspartate 774. Glutamate 750 is a Mg(2+) binding site. Aspartate 774 is a Mg(2+) binding site. Cysteine 836 (proton donor) is an active-site residue.

It belongs to the PEP-utilizing enzyme family. As to quaternary structure, homodimer. Mg(2+) is required as a cofactor. Post-translationally, phosphorylation of Thr-458 in the dark inactivates the enzyme. Dephosphorylation upon light stimulation reactivates the enzyme.

The catalysed reaction is pyruvate + phosphate + ATP = phosphoenolpyruvate + AMP + diphosphate + H(+). With respect to regulation, activated by light-induced dephosphorylation. Inhibited by dark-induced phosphorylation. Both reactions are catalyzed by PDRP1. In terms of biological role, catalyzes the reversible phosphorylation of pyruvate and phosphate. The polypeptide is Pyruvate, phosphate dikinase (ppdK) (Rickettsia prowazekii (strain Madrid E)).